Consider the following 158-residue polypeptide: Protein-export protein SecB (158 aa).

The protein belongs to the SecB family. Homotetramer, a dimer of dimers. One homotetramer interacts with 1 SecA dimer.

Its subcellular location is the cytoplasm. Functionally, one of the proteins required for the normal export of preproteins out of the cell cytoplasm. It is a molecular chaperone that binds to a subset of precursor proteins, maintaining them in a translocation-competent state. It also specifically binds to its receptor SecA. The polypeptide is Protein-export protein SecB (Pectobacterium atrosepticum (strain SCRI 1043 / ATCC BAA-672) (Erwinia carotovora subsp. atroseptica)).